A 1314-amino-acid polypeptide reads, in one-letter code: E3 ubiquitin-protein ligase RNF123 (1314 aa).

Alanine 2 carries the N-acetylalanine modification. The B30.2/SPRY domain occupies 74–254 (VDSEDNESQG…VAFNFGSRPL (181 aa)). The segment at 460–483 (HRSSRESRDGKEAREETTEERQRR) is disordered. A compositionally biased stretch (basic and acidic residues) spans 462–483 (SSRESRDGKEAREETTEERQRR). At serine 675 the chain carries Phosphoserine. An Asymmetric dimethylarginine modification is found at arginine 683. Positions 968 to 974 (WILVRLW) are interaction with NFKB1. Zn(2+)-binding residues include cysteine 1254, cysteine 1257, cysteine 1269, histidine 1271, cysteine 1274, cysteine 1277, cysteine 1288, and cysteine 1291. Residues 1254 to 1292 (CPICYAHPISAVFQPCGHKSCKACINQHLMNNKDCFFCK) form an RING-type zinc finger.

Component of the KPC complex composed of RNF123/KPC1 and UBAC1/KPC2. Interacts with UBAC1 and CDKN1B via its N-terminal domain. Interacts with RIGI (via N-terminus) and IFIH1 (via N-terminus). In terms of processing, ubiquitinated, leading to its degradation. Deubiquitinated by USP19, thereby stimulating CDKN1B ubiquitin-dependent degradation.

The protein localises to the cytoplasm. It carries out the reaction S-ubiquitinyl-[E2 ubiquitin-conjugating enzyme]-L-cysteine + [acceptor protein]-L-lysine = [E2 ubiquitin-conjugating enzyme]-L-cysteine + N(6)-ubiquitinyl-[acceptor protein]-L-lysine.. It functions in the pathway protein modification; protein ubiquitination. In terms of biological role, catalytic subunit of the KPC complex that acts as E3 ubiquitin-protein ligase. Promotes the ubiquitination and proteasome-mediated degradation of CDKN1B which is the cyclin-dependent kinase inhibitor at the G0-G1 transition of the cell cycle. Also acts as a key regulator of the NF-kappa-B signaling by promoting maturation of the NFKB1 component of NF-kappa-B: acts by catalyzing ubiquitination of the NFKB1 p105 precursor, leading to limited proteasomal degradation of NFKB1 p105 and generation of the active NFKB1 p50 subunit. Functions also as an inhibitor of innate antiviral signaling mediated by RIGI and IFIH1 independently of its E3 ligase activity. Interacts with the N-terminal CARD domains of RIGI and IFIH1 and competes with the downstream adapter MAVS. In Mus musculus (Mouse), this protein is E3 ubiquitin-protein ligase RNF123 (Rnf123).